Consider the following 297-residue polypeptide: MKRPDYRTLQALDAVIRERGFERAAQKLCITQSAVSQRIKQLENMFGQPLLVRTVPPRPTEQGQKLLALLRQVELLEEEWLGDEQTGSTPLLLSLAVNADSLATWLLPALANVLSDSPIRLNLQVEDETRTQERLRRGEVVGAVSIQPQALPSCLVDQLGALDYLFVASKEFAQRYFPNGVTRSALLKAPVVAFDHLDDMHQAFLQQNFDLPPGSVPCHIVNSSEAFVQLARQGTTCCMIPHLQIEKELKSGELIDLTPGLFQRRMLYWHRFAPESRMMRRVTDALIDYGHKVLRQD.

One can recognise an HTH lysR-type domain in the interval 4–60 (PDYRTLQALDAVIRERGFERAAQKLCITQSAVSQRIKQLENMFGQPLLVRTVPPRPT). Residues 21-40 (FERAAQKLCITQSAVSQRIK) constitute a DNA-binding region (H-T-H motif).

Belongs to the LysR transcriptional regulatory family. In terms of assembly, homodimer.

In terms of biological role, controls the transcription of genes involved in arginine and lysine metabolism. The sequence is that of HTH-type transcriptional regulator ArgP from Klebsiella pneumoniae (strain 342).